The chain runs to 530 residues: MEPTAPTGQARAAATKLSEAVGAALQEPQRQRRLVLVIVCVALLLDNMLYMVIVPIVPDYIAHMRGGSESPTLISEVWEPTLPPPTLANASAYLANTSASPTAAGSARSILRPRYPTESEDVKIGVLFASKAILQLLVNPLSGPFIDRMSYDVPLLIGLGVMFASTVMFAFAEDYATFFAARSLQGLGSAFADTSGIAMIADKYPEEPERSRALGVALAFISFGSLVAPPFGGILYEFAGKRVPFLVLAAVSLFDALLLLAVAKPFSAAARARANLPVGTPIHRLMLDPYIAVVAGALTTCNIPLAFLEPTIATWMKHTMAASEWEMGMVWLPAFVPHVLGVYLTVRLAARYPHLQWLYGALGLAVIGVSSCVVPACRSFAPLVVSLCGLCFGIALVDTALLPTLAFLVDVRHVSVYGSVYAIADISYSVAYALGPIVAGHIVHSLGFEQLSLGMGLANLLYAPVLLLLRNVGLLTRSRSERDVLLDEPPQGLYDAVRLREVQGKDGGEPCSPPGPFDGCEDDYNYYSRS.

Residues 1–33 (MEPTAPTGQARAAATKLSEAVGAALQEPQRQRR) lie on the Cytoplasmic side of the membrane. The chain crosses the membrane as a helical span at residues 34-54 (LVLVIVCVALLLDNMLYMVIV). Topologically, residues 55–125 (PIVPDYIAHM…PTESEDVKIG (71 aa)) are lumenal, vesicle. N-linked (GlcNAc...) asparagine glycans are attached at residues Asn-89 and Asn-96. A helical membrane pass occupies residues 126–146 (VLFASKAILQLLVNPLSGPFI). The Cytoplasmic segment spans residues 147–152 (DRMSYD). A helical transmembrane segment spans residues 153-173 (VPLLIGLGVMFASTVMFAFAE). At 174–182 (DYATFFAAR) the chain is on the lumenal, vesicle side. A helical membrane pass occupies residues 183-203 (SLQGLGSAFADTSGIAMIADK). Residues 204 to 213 (YPEEPERSRA) lie on the Cytoplasmic side of the membrane. Residues 214–234 (LGVALAFISFGSLVAPPFGGI) form a helical membrane-spanning segment. Topologically, residues 235 to 242 (LYEFAGKR) are lumenal, vesicle. A helical membrane pass occupies residues 243 to 263 (VPFLVLAAVSLFDALLLLAVA). The Cytoplasmic portion of the chain corresponds to 264 to 288 (KPFSAAARARANLPVGTPIHRLMLD). Residues 289-309 (PYIAVVAGALTTCNIPLAFLE) form a helical membrane-spanning segment. The Lumenal, vesicle segment spans residues 310–325 (PTIATWMKHTMAASEW). Residues 326-346 (EMGMVWLPAFVPHVLGVYLTV) form a helical membrane-spanning segment. Residues 347 to 356 (RLAARYPHLQ) lie on the Cytoplasmic side of the membrane. A helical transmembrane segment spans residues 357 to 377 (WLYGALGLAVIGVSSCVVPAC). Residues 378 to 388 (RSFAPLVVSLC) lie on the Lumenal, vesicle side of the membrane. Residues 389 to 409 (GLCFGIALVDTALLPTLAFLV) form a helical membrane-spanning segment. The Cytoplasmic portion of the chain corresponds to 410–422 (DVRHVSVYGSVYA). Residues 423–443 (IADISYSVAYALGPIVAGHIV) form a helical membrane-spanning segment. Over 444–447 (HSLG) the chain is Lumenal, vesicle. Residues 448–468 (FEQLSLGMGLANLLYAPVLLL) traverse the membrane as a helical segment. The Cytoplasmic segment spans residues 469–530 (LRNVGLLTRS…EDDYNYYSRS (62 aa)). The tract at residues 471-530 (NVGLLTRSRSERDVLLDEPPQGLYDAVRLREVQGKDGGEPCSPPGPFDGCEDDYNYYSRS) is mediates interaction with SEC14L1. A disordered region spans residues 504–530 (GKDGGEPCSPPGPFDGCEDDYNYYSRS).

The protein belongs to the major facilitator superfamily. Vesicular transporter family. As to quaternary structure, interacts with SEC14L1. In terms of tissue distribution, expressed in the spinal cord, brain (excluding the cerebellum), brain stem and cholinergic tissues. Not expressed in peripheral tissues such as liver and kidney.

Its subcellular location is the cytoplasmic vesicle. It localises to the secretory vesicle. The protein localises to the synaptic vesicle membrane. The enzyme catalyses acetylcholine(out) + 2 H(+)(in) = acetylcholine(in) + 2 H(+)(out). It carries out the reaction choline(in) + 2 H(+)(out) = choline(out) + 2 H(+)(in). The catalysed reaction is serotonin(in) + 2 H(+)(out) = serotonin(out) + 2 H(+)(in). In terms of biological role, electrogenic antiporter that exchanges one cholinergic neurotransmitter, acetylcholine or choline, with two intravesicular protons across the membrane of synaptic vesicles. Uses the electrochemical proton gradient established by the V-type proton-pump ATPase to store neurotransmitters inside the vesicles prior to their release via exocytosis. Determines cholinergic vesicular quantal size at presynaptic nerve terminals in developing neuro-muscular junctions with an impact on motor neuron differentiation and innervation pattern. Part of forebrain cholinergic system, regulates hippocampal synapse transmissions that underlie spatial memory formation. Can transport serotonin. This chain is Vesicular acetylcholine transporter (Slc18a3), found in Mus musculus (Mouse).